The following is a 147-amino-acid chain: uncharacterized protein (147 aa).

Residues 1–137 enclose the HTH marR-type domain; it reads MRDNTIGSLI…LYELMTKVHK (137 aa). The H-T-H motif DNA-binding region spans 53-76; the sequence is QMELAEKVTVTQGGISRMLTRLEK.

This is an uncharacterized protein from Bacillus cereus (strain ATCC 14579 / DSM 31 / CCUG 7414 / JCM 2152 / NBRC 15305 / NCIMB 9373 / NCTC 2599 / NRRL B-3711).